The chain runs to 362 residues: E3 ubiquitin-protein ligase TM129 (362 aa).

Residues 1–6 are Lumenal-facing; the sequence is MDSPEV. Residues 7–27 form a helical membrane-spanning segment; it reads TFTLAYLVFAVCFVFTPNEFH. At 28 to 56 the chain is on the cytoplasmic side; it reads AAGLTVQNLLSGWLGSEDAAFVPFHLRRT. A helical transmembrane segment spans residues 57–77; it reads AATLLCHSLLPLGYYVGMCLA. Residues 78 to 94 are Lumenal-facing; it reads ASEKRLHALSQAPEAWR. The chain crosses the membrane as a helical span at residues 95 to 115; the sequence is LFLLLAVTLPSIACILIYYWS. Over 116 to 362 the chain is Cytoplasmic; the sequence is RDRWACHPLA…FCILDVCTVR (247 aa). The segment at 285–350 adopts an RING-type; degenerate zinc-finger fold; that stretch reads CIGCMQTRAS…ASRVPCPTCR (66 aa).

This sequence belongs to the TMEM129 family. In terms of assembly, integral component of ER-resident dislocation complexes.

It is found in the endoplasmic reticulum membrane. The catalysed reaction is S-ubiquitinyl-[E2 ubiquitin-conjugating enzyme]-L-cysteine + [acceptor protein]-L-lysine = [E2 ubiquitin-conjugating enzyme]-L-cysteine + N(6)-ubiquitinyl-[acceptor protein]-L-lysine.. It participates in protein modification; protein ubiquitination. In terms of biological role, E3 ubiquitin-protein ligase involved in ER-associated protein degradation, preferentially associates with the E2 enzyme UBE2J2. Exploited by viral US11 proteins to mediate HLA class I proteins degradation. The polypeptide is E3 ubiquitin-protein ligase TM129 (TMEM129) (Homo sapiens (Human)).